Here is a 118-residue protein sequence, read N- to C-terminus: Large ribosomal subunit protein bL20 (118 aa).

This sequence belongs to the bacterial ribosomal protein bL20 family.

Functionally, binds directly to 23S ribosomal RNA and is necessary for the in vitro assembly process of the 50S ribosomal subunit. It is not involved in the protein synthesizing functions of that subunit. This is Large ribosomal subunit protein bL20 from Stutzerimonas stutzeri (strain A1501) (Pseudomonas stutzeri).